A 105-amino-acid chain; its full sequence is Circadian clock oscillator protein KaiB1 (105 aa).

It belongs to the KaiB family. In terms of assembly, homotetramer in solution and crystals formed by 2 dimers. Only elutes as a homotetramer in size exclusion chromatography, interacts with KaiC1 and KaiC3. The KaiABC complex composition changes during the circadian cycle to control KaiC phosphorylation. Complexes KaiC(6), KaiA(2-4):KaiC(6), KaiB(6):KaiC(6) and KaiC(6):KaiB(6):KaiA(12) are among the most important forms, many form cooperatively. Undergoes a major conformational rearrangment; in the free state forms homotetramers as a dimer of dimers. When bound to the CI domain of KaiC switches to a monomeric thioredoxin-fold (KaiB(fs)). KaiB(fs) binds CikA, leading it to dephosphorylate phospho-RpaA.

Functionally, key component of the KaiABC oscillator complex, which constitutes the main circadian regulator in cyanobacteria. Complex composition changes during the circadian cycle to control KaiC phosphorylation. KaiA stimulates KaiC autophosphorylation, while KaiB sequesters KaiA, leading to KaiC autodephosphorylation. Phospho-Ser-431 KaiC accumulation triggers binding of KaiB to form the KaiB(6):KaiC(6) complex, leading to changes in output regulators CikA and SasA. KaiB switches to a thioredoxin-like fold (KaiB(fs)) when bound to KaiC. KaiB(6):KaiC(6) formation exposes a site for KaiA binding that sequesters KaiA from KaiC, making the KaiC(6):KaiB(6):KaiA(12) complex that results in KaiC autodephosphorylation. Its function is as follows. Component of the oscillator and circadian clock in this organism, enhances fitness in a rhythmic environment. The homotetramer reduces the ATPase activity of KaiC3 by 35%. A metamorphic protein which reversibly switches between an inactive tetrameric fold and a rare, thioredoxin-like monomeric fold (KaiB(fs)). KaiB(fs) binds phospho-KaiC, KaiA and CikA. KaiA and CikA compete for binding to KaiB(fs), and KaiB(fs) and SasA compete for binding to KaiC, thus the clock oscillator and output signal pathway are tightly coupled. The chain is Circadian clock oscillator protein KaiB1 from Synechocystis sp. (strain ATCC 27184 / PCC 6803 / Kazusa).